Reading from the N-terminus, the 328-residue chain is Malate dehydrogenase (328 aa).

12–18 is an NAD(+) binding site; it reads GAAGQIG. Arg95 and Arg101 together coordinate substrate. NAD(+) contacts are provided by residues Asn108, Gln115, and 132–134; that span reads VGN. Residues Asn134 and Arg165 each contribute to the substrate site. His190 (proton acceptor) is an active-site residue.

The protein belongs to the LDH/MDH superfamily. MDH type 2 family.

It catalyses the reaction (S)-malate + NAD(+) = oxaloacetate + NADH + H(+). In terms of biological role, catalyzes the reversible oxidation of malate to oxaloacetate. The protein is Malate dehydrogenase of Polaromonas naphthalenivorans (strain CJ2).